Reading from the N-terminus, the 376-residue chain is Alcohol dehydrogenase class-3 (376 aa).

Cys-40, His-62, Cys-92, Cys-95, Cys-98, Cys-106, and Cys-170 together coordinate Zn(2+).

It belongs to the zinc-containing alcohol dehydrogenase family. Class-III subfamily. In terms of assembly, homodimer. The cofactor is Zn(2+).

It localises to the cytoplasm. It catalyses the reaction a primary alcohol + NAD(+) = an aldehyde + NADH + H(+). The catalysed reaction is a secondary alcohol + NAD(+) = a ketone + NADH + H(+). The enzyme catalyses S-(hydroxymethyl)glutathione + NADP(+) = S-formylglutathione + NADPH + H(+). It carries out the reaction S-(hydroxymethyl)glutathione + NAD(+) = S-formylglutathione + NADH + H(+). Its function is as follows. Oxidizes long-chain aliphatic alcohols, long-chain hydroxylated fatty acids and S-hydroxymethylglutathione (hmGSH) in increasing order of preference. Shows little or no activity with short-chain aliphatic alcohols. The chain is Alcohol dehydrogenase class-3 (adhI) from Cereibacter sphaeroides (strain ATCC 17023 / DSM 158 / JCM 6121 / CCUG 31486 / LMG 2827 / NBRC 12203 / NCIMB 8253 / ATH 2.4.1.) (Rhodobacter sphaeroides).